The chain runs to 166 residues: PTS system glucose-specific EIIA component (166 aa).

Residues 34 to 138 (DPVFAQKMMG…SIISPIIITN (105 aa)) form the PTS EIIA type-1 domain. The Zn(2+) site is built by His-71 and His-86. Residue His-86 is the Tele-phosphohistidine intermediate; for EIIA activity of the active site. Phosphohistidine; by HPr is present on His-86.

Heterodimer with glycerol kinase (glpk). Zn(2+) serves as cofactor.

The protein localises to the cytoplasm. Its function is as follows. The phosphoenolpyruvate-dependent sugar phosphotransferase system (sugar PTS), a major carbohydrate active transport system, catalyzes the phosphorylation of incoming sugar substrates concomitantly with their translocation across the cell membrane. The enzyme II complex composed of PtsG and Crr is involved in glucose transport. In Staphylococcus epidermidis (strain ATCC 35984 / DSM 28319 / BCRC 17069 / CCUG 31568 / BM 3577 / RP62A), this protein is PTS system glucose-specific EIIA component (crr).